The following is a 162-amino-acid chain: Protein-export protein SecB (162 aa).

The protein belongs to the SecB family. As to quaternary structure, homotetramer, a dimer of dimers. One homotetramer interacts with 1 SecA dimer.

Its subcellular location is the cytoplasm. In terms of biological role, one of the proteins required for the normal export of preproteins out of the cell cytoplasm. It is a molecular chaperone that binds to a subset of precursor proteins, maintaining them in a translocation-competent state. It also specifically binds to its receptor SecA. In Legionella pneumophila subsp. pneumophila (strain Philadelphia 1 / ATCC 33152 / DSM 7513), this protein is Protein-export protein SecB.